The following is a 436-amino-acid chain: MTVLYAPSGATQLYFHLLRKSPHNRLVVSHQTRRHLMGFVRNALGLDPPPSPEDPTPENRFHPWDQSPSVDLRERAAKIRTLAHCPVTGKDINYTCPLSGIPTHHSREAWEMDKAYHDSKKYEILKKVNIYEHDLRSGRPFPEFDFPQQQGYDKAVNLTNWDLFFYTRSFYSMDTEFQLAAVTKMLSYPITIGSLLHKFSPYSLNPKGPITLEGLKSLAALRYTLYPLENRSLPTTTKNRAMRIFILGARAEAQLPGHVWKQLQFLFPEQSFEIHFIGPECLYKRDKQEYVKSTTPVVQRVDETLKFIYRTNFFEVFHEAQDFFPYDPYMDVFFTFHPGYASPESHGSWMGETMKALLETKCAIFTTGFNKKDLTDDINLVKSKYGKEMDVLMEPVRNVFGSTKWELNDMNPQEVYQFNMYIAGFRGKRYHTIKRQ.

Residues 1-26 (MTVLYAPSGATQLYFHLLRKSPHNRL) constitute a mitochondrion transit peptide. The tract at residues 43–66 (ALGLDPPPSPEDPTPENRFHPWDQ) is disordered.

Belongs to the MSS51 family. Interacts with COX1 and COX14.

The protein localises to the mitochondrion inner membrane. Has a dual role in the assembly of cytochrome oxidase subunit 1 (COX1). It has a regulative function on COX1 synthesis, acting as a translational activator specific for the COX1 mRNA, and it also binds to newly synthesized COX1 protein. Together with COX14, may act as a chaperone that binds efficiently unassembled COX1 and prevents it from unproductive aggregation. When bound to COX1, MSS51 is unable to interact with the COX1 mRNA and translation is halted. This may be a feedback control that ensures that COX1 is only produced as long as potentially harmful assembly intermediates are not accumulating. The chain is Protein MSS51, mitochondrial (MSS51) from Saccharomyces cerevisiae (strain ATCC 204508 / S288c) (Baker's yeast).